A 196-amino-acid chain; its full sequence is Ribose 1,5-bisphosphate phosphokinase PhnN (196 aa).

This sequence belongs to the ribose 1,5-bisphosphokinase family.

The catalysed reaction is alpha-D-ribose 1,5-bisphosphate + ATP = 5-phospho-alpha-D-ribose 1-diphosphate + ADP. The protein operates within metabolic intermediate biosynthesis; 5-phospho-alpha-D-ribose 1-diphosphate biosynthesis; 5-phospho-alpha-D-ribose 1-diphosphate from D-ribose 5-phosphate (route II): step 3/3. In terms of biological role, catalyzes the phosphorylation of ribose 1,5-bisphosphate to 5-phospho-D-ribosyl alpha-1-diphosphate (PRPP). In Psychromonas ingrahamii (strain DSM 17664 / CCUG 51855 / 37), this protein is Ribose 1,5-bisphosphate phosphokinase PhnN.